The primary structure comprises 349 residues: MYISNLRLQNFRNIPAKSFDFKNSINFIVGKNGSGKTSILESIYFLSHSRSFRSSQLNRIINHNADEFIIYTKAYNPDEITISLSRKKNSNNISKLNLEIQKNHTEITRNLPIQLINPESFNIINSGAQQRCKVLDWGAFYLDKTFLKIWQQTKFLVKQRNSALKQNYPYSYILSIDKKLCEFAEILDYKRHAYFTKLKPKIYEILSHFNPNLQLDIDYFRGWNLHKSLAQVLEESFNYDNKYKVTNHGPHKADIVLSVSHKPIQDIFSRGQQKLLICALKLAQGEIHNSENDNKCIYLIDDITSELDSIHTLTLFNYLKQLKSQVFITTTEKNKINEFIDTNSYILEI.

An ATP-binding site is contributed by 30–37; sequence GKNGSGKT.

The protein belongs to the RecF family.

It is found in the cytoplasm. In terms of biological role, the RecF protein is involved in DNA metabolism; it is required for DNA replication and normal SOS inducibility. RecF binds preferentially to single-stranded, linear DNA. It also seems to bind ATP. The chain is DNA replication and repair protein RecF from Francisella tularensis subsp. novicida (strain U112).